The chain runs to 286 residues: Putative cyclin-H (286 aa).

The 70-residue stretch at 79-148 folds into the Cyclin N-terminal domain; the sequence is AIIYIKRFYL…ILESLNFNLI (70 aa). The disordered stretch occupies residues 235-286; that stretch reads NNNNNNNNNNNNNNNNNNNNNNNNNNNNNNNNNNNNNNNNNNNNNNNNNLLL.

This sequence belongs to the cyclin family. Cyclin C subfamily.

Its subcellular location is the nucleus. Functionally, may regulate cdk7 involved in transcription regulation and cell cycle progression. The protein is Putative cyclin-H (cycH) of Dictyostelium discoideum (Social amoeba).